Reading from the N-terminus, the 703-residue chain is Stonustoxin subunit alpha (703 aa).

The tract at residues 2 to 265 is structural MACPF/CDC pore-forming domain; sequence SSDLVMPALG…KAQQLIQEIN (264 aa). Residues 266 to 385 form a structural FAT domain region; that stretch reads VSKVRRIHTT…GMVEGTQAKF (120 aa). The interval 386 to 517 is thioredoxin (THX) domain; that stretch reads VSNQTELDRE…PRMPFVQGYK (132 aa). One can recognise a B30.2/SPRY domain in the interval 508-703; sequence PRMPFVQGYK…AGNHGTLRLL (196 aa).

Belongs to the SNTX/VTX toxin family. As to quaternary structure, heterodimer of alpha and beta subunits; non-covalently linked. Intrachain disulfide bonds may be present in the heterodimer. In terms of processing, not glycosylated. Expressed by the venom gland.

The protein resides in the secreted. This lethal (towards mammals) heterodimer induces hemolytic activities due to its ability to form pores in the cell membrane. The pore may be composed of 10 SNTX-alpha/beta heterodimers. The toxin elicits potent hypotension which is endothelium-dependent and appears to be mediated by the nitric oxide pathway and activation of potassium channels. In addition, it displays edema-inducing activities, increases vascular permeability. It also shows myotoxic activities and interferes irreversibly with neuromuscular function. It also induces irreversible platelet aggregation in rabbit or rat (but not in human or mouse) whole blood. In addition, it has been observed to increase spontaneous quantal acetylcholine release from isolated frog cutaneous pectoris motor endings. This is Stonustoxin subunit alpha from Synanceia horrida (Estuarine stonefish).